Consider the following 1203-residue polypeptide: DNA-directed RNA polymerase subunit beta' (1203 aa).

Positions 60, 62, 75, and 78 each coordinate Zn(2+). Residues aspartate 449, aspartate 451, and aspartate 453 each coordinate Mg(2+). Zn(2+) is bound by residues cysteine 818, cysteine 892, cysteine 899, and cysteine 902.

It belongs to the RNA polymerase beta' chain family. As to quaternary structure, the RNAP catalytic core consists of 2 alpha, 1 beta, 1 beta' and 1 omega subunit. When a sigma factor is associated with the core the holoenzyme is formed, which can initiate transcription. Requires Mg(2+) as cofactor. Zn(2+) is required as a cofactor.

The catalysed reaction is RNA(n) + a ribonucleoside 5'-triphosphate = RNA(n+1) + diphosphate. DNA-dependent RNA polymerase catalyzes the transcription of DNA into RNA using the four ribonucleoside triphosphates as substrates. This chain is DNA-directed RNA polymerase subunit beta', found in Bacillus mycoides (strain KBAB4) (Bacillus weihenstephanensis).